The chain runs to 28 residues: leu operon leader peptide (28 aa).

Involved in control of the biosynthesis of leucine. This is leu operon leader peptide (leuL) from Shigella flexneri.